The sequence spans 867 residues: Ent-copalyl diphosphate synthase 1, chloroplastic (867 aa).

The N-terminal 35 residues, 1 to 35 (MIHLHSPPTAPAAFGGAGSADWRRRRRWSWSSSSR), are a transit peptide targeting the chloroplast. The disordered stretch occupies residues 1–134 (MIHLHSPPTA…ADEEADDELQ (134 aa)). The span at 51-64 (RGGDDGGGEDHHAD) shows a compositional bias: basic and acidic residues. The segment covering 74-89 (AWRARATTAGVSSSSS) has biased composition (low complexity). Positions 99–121 (IEHETPRITKWPNESRDLDDHQQ) are enriched in basic and acidic residues. The segment covering 124–133 (EADEEADDEL) has biased composition (acidic residues). Lysine 286 contacts substrate. Positions 418–421 (EVDD) match the DXDD motif motif. Residue lysine 504 participates in substrate binding.

This sequence belongs to the terpene synthase family. It depends on Mg(2+) as a cofactor.

It localises to the plastid. It is found in the chloroplast. The enzyme catalyses (2E,6E,10E)-geranylgeranyl diphosphate = ent-copalyl diphosphate. It participates in plant hormone biosynthesis; gibberellin biosynthesis. In terms of biological role, catalyzes the conversion of geranylgeranyl diphosphate to the gibberellin precursor ent-copalyl diphosphate. The chain is Ent-copalyl diphosphate synthase 1, chloroplastic (CPS1) from Oryza sativa subsp. japonica (Rice).